The sequence spans 267 residues: Tryptophan synthase alpha chain (267 aa).

Residues E47 and D58 each act as proton acceptor in the active site.

The protein belongs to the TrpA family. As to quaternary structure, tetramer of two alpha and two beta chains.

The catalysed reaction is (1S,2R)-1-C-(indol-3-yl)glycerol 3-phosphate + L-serine = D-glyceraldehyde 3-phosphate + L-tryptophan + H2O. Its pathway is amino-acid biosynthesis; L-tryptophan biosynthesis; L-tryptophan from chorismate: step 5/5. Its function is as follows. The alpha subunit is responsible for the aldol cleavage of indoleglycerol phosphate to indole and glyceraldehyde 3-phosphate. This is Tryptophan synthase alpha chain from Chlorobaculum tepidum (strain ATCC 49652 / DSM 12025 / NBRC 103806 / TLS) (Chlorobium tepidum).